We begin with the raw amino-acid sequence, 240 residues long: uncharacterized protein (240 aa).

Positions 197–210 are enriched in polar residues; sequence PLKSHSASRLNHLT. The segment at 197-222 is disordered; sequence PLKSHSASRLNHLTPSPRPGETPLEN.

This is an uncharacterized protein from Caenorhabditis elegans.